A 130-amino-acid chain; its full sequence is Odontogenesis associated phosphoprotein (130 aa).

The signal sequence occupies residues 1–23; the sequence is MARRHCFSYWLLVCWLVVTVAEG.

Highly expressed in placenta.

The protein localises to the secreted. Its function is as follows. May promote nucleation of hydroxyapatite. This is Odontogenesis associated phosphoprotein from Homo sapiens (Human).